The chain runs to 422 residues: G-protein coupled receptor 83 (422 aa).

Positions 1 to 16 (MGRRGALLCLLPLLRA) are cleaved as a signal peptide. Residues 17 to 70 (AERPEGRADEPGLEAALAGPNASHFFWSNYSFSDWQNFVGRRRYGAESQNPTVK) are Extracellular-facing. N-linked (GlcNAc...) asparagine glycosylation is found at Asn37 and Asn45. The helical transmembrane segment at 71-91 (ALLVVAYSFIIVFSLFGNVLV) threads the bilayer. Over 92-106 (CHVIFKNQRMRSATS) the chain is Cytoplasmic. The helical transmembrane segment at 107 to 128 (LFIVNLAVADILITLLNTPFTL) threads the bilayer. The Extracellular portion of the chain corresponds to 129-144 (VRFVNSTWVFGKGMCH). Asn133 is a glycosylation site (N-linked (GlcNAc...) asparagine). The helical transmembrane segment at 145-166 (VSRFAQYCSLHVSALTLTAIAV) threads the bilayer. The Cytoplasmic segment spans residues 167–185 (DRHQVIMHPLKPRISITKG). A helical transmembrane segment spans residues 186–207 (VIYITVIWTMATFFSLPHAICQ). The Extracellular portion of the chain corresponds to 208 to 237 (KLFTFKYSEDIVRSLCLPDFPEPADLFWKY). A helical membrane pass occupies residues 238–259 (LDLATFILLYILPLLIISVAYA). The Cytoplasmic segment spans residues 260-292 (RVAKKLWLCNTIGDVTTEQYLALRRKKKKTIKM). A helical membrane pass occupies residues 293–314 (LMLVVVLFALCWFPLNCYVLLL). Topologically, residues 315 to 326 (SSKVIHTNNALY) are extracellular. Residues 327-347 (FAFHWFAMSSTCYNPFIYCWL) form a helical membrane-spanning segment. Topologically, residues 348-422 (NENFRIELKA…SSVEPIVAMS (75 aa)) are cytoplasmic.

It belongs to the G-protein coupled receptor 1 family.

The protein resides in the cell membrane. G-protein coupled receptor for PEN, a neuropeptide produced from the precursor protein, proSAAS (encoded by PCSK1N). Acts through a G(i)- and G(q)-alpha-alpha-mediated pathway in response to PEN. Plays a role in food intake and body weight regulation. May contribute to the regulation of anxiety-related behaviors. In Canis lupus familiaris (Dog), this protein is G-protein coupled receptor 83 (GPR83).